The sequence spans 123 residues: Ribosome-binding factor A (123 aa).

This sequence belongs to the RbfA family. Monomer. Binds 30S ribosomal subunits, but not 50S ribosomal subunits or 70S ribosomes.

Its subcellular location is the cytoplasm. In terms of biological role, one of several proteins that assist in the late maturation steps of the functional core of the 30S ribosomal subunit. Associates with free 30S ribosomal subunits (but not with 30S subunits that are part of 70S ribosomes or polysomes). Required for efficient processing of 16S rRNA. May interact with the 5'-terminal helix region of 16S rRNA. The chain is Ribosome-binding factor A from Cupriavidus metallidurans (strain ATCC 43123 / DSM 2839 / NBRC 102507 / CH34) (Ralstonia metallidurans).